Reading from the N-terminus, the 524-residue chain is Tubulin-specific chaperone E (524 aa).

An N-acetylserine modification is found at serine 2. The 45-residue stretch at 27 to 71 folds into the CAP-Gly domain; it reads GAVPPVAGLWLGVEWDNPERGKHDGSHEGTMYFKCRHPTGGSFVR. 7 LRR repeats span residues 154–175, 180–201, 206–227, 231–253, 254–275, 279–300, and 309–330; these read NIRV…VLIA, DLEA…PTLT, TLKT…HCAP, VLEE…NVLQ, KMRL…SLIA, RLEH…DAEI, and ALKY…NELD. Residues 343-381 form the LRRCT domain; it reads NPLSKADKAEEIIIAKIAQLRTLNRCQILPEERRGAELD. Lysine 460 bears the N6-acetyllysine mark. Serine 492 bears the Phosphoserine mark.

The protein belongs to the TBCE family. Supercomplex made of cofactors A to E. Cofactors A and D function by capturing and stabilizing tubulin in a quasi-native conformation. Cofactor E binds to the cofactor D-tubulin complex; interaction with cofactor C then causes the release of tubulin polypeptides that are committed to the native state. Cofactors B and E can form a heterodimer which binds to alpha-tubulin and enhances their ability to dissociate tubulin heterodimers. Interacts with TBCD. Ubiquitously expressed.

Its subcellular location is the cytoplasm. The protein resides in the cytoskeleton. Its function is as follows. Tubulin-folding protein; involved in the second step of the tubulin folding pathway and in the regulation of tubulin heterodimer dissociation. Required for correct organization of microtubule cytoskeleton and mitotic splindle, and maintenance of the neuronal microtubule network. This chain is Tubulin-specific chaperone E (Tbce), found in Mus musculus (Mouse).